A 138-amino-acid polypeptide reads, in one-letter code: Small ribosomal subunit protein uS11 (138 aa).

The protein belongs to the universal ribosomal protein uS11 family. As to quaternary structure, part of the 30S ribosomal subunit.

Located on the platform of the 30S subunit. In Pyrobaculum arsenaticum (strain DSM 13514 / JCM 11321 / PZ6), this protein is Small ribosomal subunit protein uS11.